We begin with the raw amino-acid sequence, 759 residues long: Cullin-4A (759 aa).

Residues 1–40 form a disordered region; the sequence is MADEGPRKGSVSALMGRTNGLTKPAALAGGPAKPGGTGGS. Lysine 8 participates in a covalent cross-link: Glycyl lysine isopeptide (Lys-Gly) (interchain with G-Cter in SUMO2). The residue at position 10 (serine 10) is a Phosphoserine. Low complexity predominate over residues 20 to 31; it reads GLTKPAALAGGP. Lysine 33 participates in a covalent cross-link: Glycyl lysine isopeptide (Lys-Gly) (interchain with G-Cter in ubiquitin). The Cullin neddylation domain maps to 691 to 750; that stretch reads DRQYQIDAAIVRIMKMRKTLGHNLLVSELYNQLKFPVKPGDLKKRIESLIDRDYMERDKD. Lysine 705 is covalently cross-linked (Glycyl lysine isopeptide (Lys-Gly) (interchain with G-Cter in NEDD8)).

This sequence belongs to the cullin family. In terms of assembly, can self-associate. Component of multiple DCX (DDB1-CUL4-X-box) E3 ubiquitin-protein ligase complexes that seem to consist of DDB1, CUL4A or CUL4B, RBX1 and a variable substrate recognition component which seems to belong to a protein family described as DCAF (Ddb1- and Cul4-associated factor) or CDW (CUL4-DDB1-associated WD40-repeat) proteins. Component of the CSA complex (DCX(ERCC8) complex) containing ERCC8, RBX1, DDB1 and CUL4A; the CSA complex interacts with RNA polymerase II; upon UV irradiation it interacts with the COP9 signalosome and preferentially with the hyperphosphorylated form of RNA polymerase II. Component of the DCX(DET1-COP1) complex with the substrate recognition component DET1 and COP1. Component of the DCX(DDB2) complex with the substrate recognition component DDB2. Component of the DCX(DTL) complex with the putative substrate recognition component DTL. Component of DCX complexes part of the DesCEND (destruction via C-end degrons) pathway, which contain either TRPC4AP or DCAF12 as substrate-recognition component. Component of the DCX(AMBRA1) complex with the substrate recognition component AMBRA1. Interacts with DDB1, RBX1, RNF7, CDT1, TIP120A/CAND1, SKP2, CDKN1B, MDM2, TP53 and HOXA9. Interacts with DDB2; the interactions with DDB2 and CAND1 are mutually exclusive. Interacts with DCAF1, DTL, DDA1, DCAF6, DCAF4, DCAF16, DCAF17, DET1, WDTC1, DCAF5, DCAF11, WDR24A, COP1, PAFAH1B1, ERCC8, GRWD1, FBXW5, RBBP7, GNB2, WSB1, WSB2, NUP43, PWP1, FBXW8, ATG16L1, KATNB1, RBBP4, RBBP5, LRWD1 and DCAF8. May interact with WDR26, WDR51B, SNRNP40, WDR61, WDR76, WDR5. Interacts (when neddylated) with ARIH1; leading to activate the E3 ligase activity of ARIH1. The DDB1-CUL4A complex interacts with CRY1. Interacts (unneddylated form) with DCUN1D1, DCUN1D2, DCUN1D3, DCUN1D4 and DCUN1D5; these interactions promote the cullin neddylation. (Microbial infection) Interacts with murine cytomegalovirus M48. In terms of processing, neddylated; required for activity of cullin-RING-based E3 ubiquitin-protein ligase complexes. Deneddylated via its interaction with the COP9 signalosome (CSN) complex. (Microbial infection) Deneddylated by murine cytomegalovirus M48 leading to a S-phase-like environment that is required for efficient replication of the viral genome. In terms of tissue distribution, expressed in oocytes (at protein level). In the ovary, also expressed in cumulus cells. Expressed in testis, spleen and kidney.

Its pathway is protein modification; protein ubiquitination. Core component of multiple cullin-RING-based E3 ubiquitin-protein ligase complexes which mediate the ubiquitination of target proteins. As a scaffold protein may contribute to catalysis through positioning of the substrate and the ubiquitin-conjugating enzyme. The E3 ubiquitin-protein ligase activity of the complex is dependent on the neddylation of the cullin subunit and is inhibited by the association of the deneddylated cullin subunit with TIP120A/CAND1. The functional specificity of the E3 ubiquitin-protein ligase complex depends on the variable substrate recognition component. DCX(DET1-COP1) directs ubiquitination of JUN. DCX(DDB2) directs ubiquitination of XPC. DCX(DDB2) ubiquitinates histones H3-H4 and is required for efficient histone deposition during replication-coupled (H3.1) and replication-independent (H3.3) nucleosome assembly, probably by facilitating the transfer of H3 from ASF1A/ASF1B to other chaperones involved in histone deposition. DCX(DTL) plays a role in PCNA-dependent polyubiquitination of CDT1 and MDM2-dependent ubiquitination of p53/TP53 in response to radiation-induced DNA damage and during DNA replication. DCX(DTL) directs autoubiquitination of DTL. In association with DDB1 and SKP2 probably is involved in ubiquitination of CDKN1B/p27kip. Is involved in ubiquitination of HOXA9. The DDB1-CUL4A-DTL E3 ligase complex regulates the circadian clock function by mediating the ubiquitination and degradation of CRY1. The DCX(ERCC8) complex (also named CSA complex) plays a role in transcription-coupled repair (TCR). A number of DCX complexes (containing either TRPC4AP or DCAF12 as substrate-recognition component) are part of the DesCEND (destruction via C-end degrons) pathway, which recognizes a C-degron located at the extreme C terminus of target proteins, leading to their ubiquitination and degradation. With CUL4B, contributes to ribosome biogenesis. The DCX(AMBRA1) complex is a master regulator of the transition from G1 to S cell phase by mediating ubiquitination of phosphorylated cyclin-D (CCND1, CCND2 and CCND3). The DCX(AMBRA1) complex also acts as a regulator of Cul5-RING (CRL5) E3 ubiquitin-protein ligase complexes by mediating ubiquitination and degradation of Elongin-C (ELOC) component of CRL5 complexes. This chain is Cullin-4A, found in Mus musculus (Mouse).